The sequence spans 214 residues: Large ribosomal subunit protein uL3 (214 aa).

Residues 130–151 are compositionally biased toward polar residues; sequence FSSNRASHGNSRSHNTPGSIGQ. The tract at residues 130–163 is disordered; that stretch reads FSSNRASHGNSRSHNTPGSIGQAQDPGRVFPGKR. N5-methylglutamine is present on Gln153.

It belongs to the universal ribosomal protein uL3 family. In terms of assembly, part of the 50S ribosomal subunit. Forms a cluster with proteins L14 and L19. In terms of processing, methylated by PrmB.

One of the primary rRNA binding proteins, it binds directly near the 3'-end of the 23S rRNA, where it nucleates assembly of the 50S subunit. The sequence is that of Large ribosomal subunit protein uL3 from Chromobacterium violaceum (strain ATCC 12472 / DSM 30191 / JCM 1249 / CCUG 213 / NBRC 12614 / NCIMB 9131 / NCTC 9757 / MK).